Consider the following 132-residue polypeptide: Translation initiation factor 5A (132 aa).

Lysine 36 bears the Hypusine mark.

The protein belongs to the eIF-5A family.

The protein localises to the cytoplasm. Functions by promoting the formation of the first peptide bond. The protein is Translation initiation factor 5A (eIF5A) of Thermofilum pendens (strain DSM 2475 / Hrk 5).